Here is a 430-residue protein sequence, read N- to C-terminus: Histidine--tRNA ligase (430 aa).

Belongs to the class-II aminoacyl-tRNA synthetase family. Homodimer.

Its subcellular location is the cytoplasm. The catalysed reaction is tRNA(His) + L-histidine + ATP = L-histidyl-tRNA(His) + AMP + diphosphate + H(+). The chain is Histidine--tRNA ligase from Lactococcus lactis subsp. lactis (strain IL1403) (Streptococcus lactis).